The primary structure comprises 248 residues: Zinc finger CCCH domain-containing protein 36 (248 aa).

Disordered stretches follow at residues 1–37 and 87–110; these read MDTRKRGRPEAGSFNSNGGGYKKSKQEMESYSTGLGS and MQGSGNGGRFSGRGESGPGHVSNF. A C3H1-type 1 zinc finger spans residues 36-64; sequence GSKSKPCTKFFSTSGCPFGENCHFLHYVP. Gly residues predominate over residues 90–103; that stretch reads SGNGGRFSGRGESG. Residues 113 to 177 enclose the KH domain; that stretch reads SATARFSVDA…EQISEASAMV (65 aa). The interval 188–209 is disordered; that stretch reads AKKPPGGGLGGGGGMGSEGKPH. Over residues 192–204 the composition is skewed to gly residues; sequence PGGGLGGGGGMGS. The C3H1-type 2 zinc-finger motif lies at 213–240; the sequence is NFKTKICERFSKGNCTFGDRCHFAHGEA.

The sequence is that of Zinc finger CCCH domain-containing protein 36 from Arabidopsis thaliana (Mouse-ear cress).